A 501-amino-acid chain; its full sequence is Pyruvate kinase (501 aa).

Arg-50 is a substrate binding site. Residues Asn-52, Ser-54, Asp-85, and Thr-86 each coordinate K(+). 52 to 55 contributes to the ATP binding site; the sequence is NFSH. Residues Arg-92 and Lys-178 each coordinate ATP. Glu-243 is a Mg(2+) binding site. The substrate site is built by Gly-266, Asp-267, and Thr-299. Asp-267 contacts Mg(2+).

The protein belongs to the pyruvate kinase family. Homotetramer. Requires Mg(2+) as cofactor. K(+) serves as cofactor.

The catalysed reaction is pyruvate + ATP = phosphoenolpyruvate + ADP + H(+). It participates in carbohydrate degradation; glycolysis; pyruvate from D-glyceraldehyde 3-phosphate: step 5/5. This Kluyveromyces lactis (strain ATCC 8585 / CBS 2359 / DSM 70799 / NBRC 1267 / NRRL Y-1140 / WM37) (Yeast) protein is Pyruvate kinase (PYK1).